The chain runs to 159 residues: RNA pyrophosphohydrolase (159 aa).

Residues 6-149 form the Nudix hydrolase domain; it reads GFRPNVGIIL…KREVYRRALK (144 aa). A Nudix box motif is present at residues 38–59; it reads GGINPDETPEDALYRELNEEVG.

Belongs to the Nudix hydrolase family. RppH subfamily. Requires a divalent metal cation as cofactor.

In terms of biological role, accelerates the degradation of transcripts by removing pyrophosphate from the 5'-end of triphosphorylated RNA, leading to a more labile monophosphorylated state that can stimulate subsequent ribonuclease cleavage. This chain is RNA pyrophosphohydrolase, found in Pseudomonas fluorescens (strain SBW25).